The chain runs to 506 residues: uncharacterized protein (506 aa).

This sequence to R.prowazekii RP789, RP027 and RP028.

This is an uncharacterized protein from Synechocystis sp. (strain ATCC 27184 / PCC 6803 / Kazusa).